A 906-amino-acid polypeptide reads, in one-letter code: NADH-quinone oxidoreductase subunit G (906 aa).

The 2Fe-2S ferredoxin-type domain maps to Ala-2–Glu-83. The [2Fe-2S] cluster site is built by Cys-34, Cys-45, Cys-48, and Cys-67. The 4Fe-4S His(Cys)3-ligated-type domain maps to Glu-83–Lys-122. Residues His-99, Cys-103, Cys-106, Cys-112, Cys-151, Cys-154, Cys-157, Cys-201, Cys-228, Cys-231, Cys-235, and Cys-263 each contribute to the [4Fe-4S] cluster site. Positions Met-221–Thr-277 constitute a 4Fe-4S Mo/W bis-MGD-type domain.

This sequence belongs to the complex I 75 kDa subunit family. In terms of assembly, composed of 13 different subunits. Subunits NuoCD, E, F, and G constitute the peripheral sector of the complex. The cofactor is [2Fe-2S] cluster. [4Fe-4S] cluster is required as a cofactor.

It catalyses the reaction a quinone + NADH + 5 H(+)(in) = a quinol + NAD(+) + 4 H(+)(out). Functionally, NDH-1 shuttles electrons from NADH, via FMN and iron-sulfur (Fe-S) centers, to quinones in the respiratory chain. Couples the redox reaction to proton translocation (for every two electrons transferred, four hydrogen ions are translocated across the cytoplasmic membrane), and thus conserves the redox energy in a proton gradient. This is NADH-quinone oxidoreductase subunit G (nuoG) from Buchnera aphidicola subsp. Acyrthosiphon pisum (strain APS) (Acyrthosiphon pisum symbiotic bacterium).